Reading from the N-terminus, the 1336-residue chain is Putative botulinum-like toxin Wo (1336 aa).

Positions 1–476 (MDVLEMFDVN…VAGMQRMVSL (476 aa)) are has protease activity. Residue H250 participates in Zn(2+) binding. The active site involves E251. Residues H254 and E296 each contribute to the Zn(2+) site.

This sequence belongs to the peptidase M27 family. Zn(2+) is required as a cofactor.

It carries out the reaction Limited hydrolysis of proteins of the neuroexocytosis apparatus, synaptobrevins, SNAP25 or syntaxin. No detected action on small molecule substrates.. Inhibited by EDTA and 1,10-phenanthroline. When overexpressed the N-terminus (residues 1-476) cleaves rat synaptobrevin-2/VAMP2 between '89-Trp-|-Trp-90' in vitro. This releases the cytoplasmic domain of VAMP2 from the synaptic vesicle membrane, which would prevent the assembly of the trans-SNARE complex on the membrane and thus prevent vesicle-target membrane fusion and neurotransmitter release. This Weissella oryzae (strain DSM 25784 / JCM 18191 / LMG 30913 / SG25) protein is Putative botulinum-like toxin Wo.